The chain runs to 506 residues: Histidine ammonia-lyase (506 aa).

The segment at residues 142–144 is a cross-link (5-imidazolinone (Ala-Gly)); the sequence is ASG. Ser-143 is subject to 2,3-didehydroalanine (Ser).

Belongs to the PAL/histidase family. Post-translationally, contains an active site 4-methylidene-imidazol-5-one (MIO), which is formed autocatalytically by cyclization and dehydration of residues Ala-Ser-Gly.

It is found in the cytoplasm. It catalyses the reaction L-histidine = trans-urocanate + NH4(+). Its pathway is amino-acid degradation; L-histidine degradation into L-glutamate; N-formimidoyl-L-glutamate from L-histidine: step 1/3. This chain is Histidine ammonia-lyase, found in Bacillus cereus (strain B4264).